Consider the following 476-residue polypeptide: MAKEQVQAITKMEEDFAQWYTDIVKKAELVDYSSVKGCMILRPYGYALWENMQKVMDEKLKATGHENVYMPMFIPESLLQKEKDHVEGFAPEVAWVTHGGDEKLAERLCIRPTSETLFCEHFSKIVQSYNDLPKLYNQWCSVVRWEKTTRPFLRTTEFLWQEGHTIHETAEESQAETLNILNLYASFCEDYLAIPVIKGQKTEKEKFAGAKATYTIESLMHDGKALQTGTSHNFGTNFSEAFDIKFLDRNGKWQYVHQTSWGVSARMIGGLIMVHSDNNGLVMPPKVAPVQVVIVPIAQHKEGVLAKATELQEHIQKVARVKIDASNKTPGWKFNEYEMKGIPIRLEVGPKDIEKNQVVLVRRDTKEKEFIAMEQLEERIPALLEEIHNSLFNKAKVFRDENTYSVTKFEEMKKVADEKQGFIKAMWCGELACEEKLKEEVGVSSRCMPFEQEHLANECICCGKEAKQMVYWGKAY.

Belongs to the class-II aminoacyl-tRNA synthetase family. ProS type 3 subfamily. In terms of assembly, homodimer.

Its subcellular location is the cytoplasm. It catalyses the reaction tRNA(Pro) + L-proline + ATP = L-prolyl-tRNA(Pro) + AMP + diphosphate. Functionally, catalyzes the attachment of proline to tRNA(Pro) in a two-step reaction: proline is first activated by ATP to form Pro-AMP and then transferred to the acceptor end of tRNA(Pro). This chain is Proline--tRNA ligase 2, found in Bacillus cereus (strain ATCC 10987 / NRS 248).